The sequence spans 260 residues: Purine nucleoside phosphorylase XF_0940 (260 aa).

3 residues coordinate Zn(2+): histidine 79, cysteine 120, and histidine 137.

The protein belongs to the purine nucleoside phosphorylase YfiH/LACC1 family. Homodimer. The cofactor is Cu(2+). It depends on Zn(2+) as a cofactor.

It catalyses the reaction adenosine + phosphate = alpha-D-ribose 1-phosphate + adenine. It carries out the reaction S-methyl-5'-thioadenosine + phosphate = 5-(methylsulfanyl)-alpha-D-ribose 1-phosphate + adenine. The catalysed reaction is inosine + phosphate = alpha-D-ribose 1-phosphate + hypoxanthine. The enzyme catalyses adenosine + H2O + H(+) = inosine + NH4(+). Functionally, purine nucleoside enzyme that catalyzes the phosphorolysis of adenosine and inosine nucleosides, yielding D-ribose 1-phosphate and the respective free bases, adenine and hypoxanthine. Also catalyzes the phosphorolysis of S-methyl-5'-thioadenosine into adenine and S-methyl-5-thio-alpha-D-ribose 1-phosphate. Also has adenosine deaminase activity. This chain is Purine nucleoside phosphorylase XF_0940, found in Xylella fastidiosa (strain 9a5c).